The chain runs to 65 residues: PDTKCVCCQDGKQCPCAGQECCITGKCCKDGASVCCGTCSNAACKCTGGCKCEGGCVCTEGNCTC.

The protein belongs to the metallothionein superfamily. Type 4 family.

Functionally, metallothioneins have a high content of cysteine residues that bind various heavy metals. The chain is Metallothionein from Paracentrotus lividus (Common sea urchin).